The following is a 187-amino-acid chain: UPF0340 protein SPT_0687 (187 aa).

Belongs to the UPF0340 family.

In Streptococcus pneumoniae (strain Taiwan19F-14), this protein is UPF0340 protein SPT_0687.